A 346-amino-acid chain; its full sequence is Endo-1,4-beta-xylanase B (346 aa).

The signal sequence occupies residues 1-19 (MKGLPALLLLLIGCVSSFG). The 298-residue stretch at 41 to 338 (GNNFWSLPDA…KPCYFAIREL (298 aa)) folds into the GH10 domain. The active-site Proton donor is Glu153. Residue Glu259 is the Nucleophile of the active site.

This sequence belongs to the glycosyl hydrolase 10 (cellulase F) family.

The enzyme catalyses Endohydrolysis of (1-&gt;4)-beta-D-xylosidic linkages in xylans.. In Thermotoga neapolitana, this protein is Endo-1,4-beta-xylanase B (xynB).